Reading from the N-terminus, the 347-residue chain is uncharacterized protein (347 aa).

Positions 39, 65, 95, 98, 101, 109, and 152 each coordinate Zn(2+).

This sequence belongs to the zinc-containing alcohol dehydrogenase family. Zn(2+) is required as a cofactor.

This is an uncharacterized protein from Escherichia coli (strain K12).